Reading from the N-terminus, the 306-residue chain is Beta-lactamase 1 (306 aa).

Positions 1 to 27 are cleaved as a signal peptide; sequence MILKNKRMLKIGICVGILGLSITSLEA. Serine 91 serves as the catalytic Acyl-ester intermediate. Residue glutamate 187 is the Proton acceptor of the active site. Residue 253–255 coordinates substrate; that stretch reads KSG.

It belongs to the class-A beta-lactamase family.

The enzyme catalyses a beta-lactam + H2O = a substituted beta-amino acid. Functionally, this protein is a beta-lactamase with a substrate specificity for penicillins. This is Beta-lactamase 1 (blaY) from Bacillus cereus.